We begin with the raw amino-acid sequence, 313 residues long: Olfactory receptor 51A2 (313 aa).

Over M1–I27 the chain is Extracellular. N5 is a glycosylation site (N-linked (GlcNAc...) asparagine). A helical transmembrane segment spans residues W28–L48. Residues F49–S56 are Cytoplasmic-facing. The helical transmembrane segment at L57–L77 threads the bilayer. At S78 to A101 the chain is on the extracellular side. A disulfide bridge connects residues C99 and C191. The chain crosses the membrane as a helical span at residues Q102 to F122. The Cytoplasmic portion of the chain corresponds to D123–V141. A helical membrane pass occupies residues R142 to P162. At F163–V198 the chain is on the extracellular side. The chain crosses the membrane as a helical span at residues I199 to S218. Residues Y219–A238 are Cytoplasmic-facing. A helical membrane pass occupies residues L239–L259. Topologically, residues A260–N274 are extracellular. The helical transmembrane segment at V275–V295 threads the bilayer. Over K296 to I313 the chain is Cytoplasmic.

It belongs to the G-protein coupled receptor 1 family.

It is found in the cell membrane. Odorant receptor. The chain is Olfactory receptor 51A2 (OR51A2) from Homo sapiens (Human).